A 30-amino-acid polypeptide reads, in one-letter code: Cycloviolacin-O20 (30 aa).

A cross-link (cyclopeptide (Gly-Asp)) is located at residues 1–30 (GIPCGESCVWIPCLTSAIGCSCKSKVCYRD). 3 cysteine pairs are disulfide-bonded: C4–C20, C8–C22, and C13–C27.

Post-translationally, this is a cyclic peptide.

Functionally, probably participates in a plant defense mechanism. The protein is Cycloviolacin-O20 of Viola odorata (Sweet violet).